We begin with the raw amino-acid sequence, 236 residues long: MSFLKSFPPPGPTEGLRHQQPDTEAVLNGKGLGTGTLYIAESRLSWLDGSGLGFSLEYPTISLHAVSRDPNAYPQEHLYVMVNAKFGEESKELVADEEEDSDDDVEPISEFRFVPGDKSALEAMFTAMCECQALHPDPEDEDSDDYDGEEYDVEAHEQGQGDIPTFYTYEEGLSHLTAEGQATLERLEGMLSQSVSSQYNMAGVRTEDSIRDYEDGMEVDTTPTVAGQFEDADVDH.

The tract at residues 1–20 is disordered; that stretch reads MSFLKSFPPPGPTEGLRHQQ. N-acetylserine is present on serine 2. Serine 101, serine 143, serine 192, serine 194, serine 197, and serine 209 each carry phosphoserine. Threonine 222 bears the Phosphothreonine mark.

This sequence belongs to the pICln (TC 1.A.47) family. As to quaternary structure, component of the methylosome, a 20S complex containing at least PRMT5/SKB1, WDR77/MEP50 and CLNS1A/pICln. May mediate SNRPD1 and SNRPD3 methylation. Forms a 6S pICln-Sm complex composed of CLNS1A/pICln, SNRPD1, SNRPD2, SNRPE, SNRPF and SNRPG; ring-like structure where CLNS1A/pICln mimics additional Sm proteins and which is unable to assemble into the core snRNP. Interacts with LSM10 and LSM11. As to expression, widely distributed but expressed more abundantly in nonpigmented ciliary epithelial cells than in pigmented ones.

The protein resides in the cytoplasm. The protein localises to the cytosol. Its subcellular location is the nucleus. It is found in the cytoskeleton. Functionally, involved in both the assembly of spliceosomal snRNPs and the methylation of Sm proteins. Chaperone that regulates the assembly of spliceosomal U1, U2, U4 and U5 small nuclear ribonucleoproteins (snRNPs), the building blocks of the spliceosome, and thereby plays an important role in the splicing of cellular pre-mRNAs. Most spliceosomal snRNPs contain a common set of Sm proteins SNRPB, SNRPD1, SNRPD2, SNRPD3, SNRPE, SNRPF and SNRPG that assemble in a heptameric protein ring on the Sm site of the small nuclear RNA to form the core snRNP (Sm core). In the cytosol, the Sm proteins SNRPD1, SNRPD2, SNRPE, SNRPF and SNRPG are trapped in an inactive 6S pICln-Sm complex by the chaperone CLNS1A that controls the assembly of the core snRNP. Dissociation by the SMN complex of CLNS1A from the trapped Sm proteins and their transfer to an SMN-Sm complex triggers the assembly of core snRNPs and their transport to the nucleus. This chain is Methylosome subunit pICln (CLNS1A), found in Oryctolagus cuniculus (Rabbit).